The sequence spans 826 residues: U4/U6 snRNA-associated-splicing factor PRP24 (826 aa).

4 RRM domains span residues 310–385 (TSVF…EAAG), 386–463 (ITLY…YSDP), 477–554 (REVH…LSVS), and 598–670 (RSFA…AVPQ).

Its subcellular location is the nucleus. Functionally, functions as a recycling factor of the spliceosome, a machinery that forms on each precursor-messenger RNA (pre-mRNA) and catalyzes the removal of introns. Chaperones the re-annealing of U4 and U6 snRNAs (small nuclear RNAs) released from previous rounds of splicing, an initial step in reforming the U4/U6-U5 tri-snRNP (small nuclear ribonucleoprotein) that can reassemble into another spliceosome complex; this step involves binding U6 and facilitating the unwinding of the U6 internal stem loop, followed by base-pairing of U6 to U4. The polypeptide is U4/U6 snRNA-associated-splicing factor PRP24 (Ophiostoma ulmi (Dutch elm disease fungus)).